Consider the following 484-residue polypeptide: uncharacterized protein (484 aa).

This is an uncharacterized protein from Orgyia pseudotsugata multicapsid polyhedrosis virus (OpMNPV).